A 474-amino-acid chain; its full sequence is Gamma-aminobutyric acid receptor subunit beta-1 (474 aa).

An N-terminal signal peptide occupies residues 1 to 25 (MWTVQNRESLGLLSFPVMIAMVCCA). At 26-245 (HSANEPSNMS…SFRLKRNIGY (220 aa)) the chain is on the extracellular side. Residues N33 and N105 are each glycosylated (N-linked (GlcNAc...) asparagine). Histamine is bound at residue Y122. A disulfide bond links C161 and C175. N-linked (GlcNAc...) asparagine glycosylation is present at N174. Histamine is bound by residues 181-182 (SY) and T227. Residues Y182 and T227 each contribute to the 4-aminobutanoate site. The next 3 membrane-spanning stretches (helical) occupy residues 246–267 (FILQ…SFWI), 271–293 (ASAA…STHL), and 305–327 (AIDI…YAFV). The Cytoplasmic segment spans residues 328–451 (NYIFFGKGPQ…DLTDVNSIDK (124 aa)). Residues 452-473 (WSRMFFPITFSLFNVVYWLYYV) traverse the membrane as a helical segment.

The protein belongs to the ligand-gated ion channel (TC 1.A.9) family. Gamma-aminobutyric acid receptor (TC 1.A.9.5) subfamily. GABRB1 sub-subfamily. As to quaternary structure, heteropentamer, formed by a combination of alpha (GABRA1-6), beta (GABRB1-3), gamma (GABRG1-3), delta (GABRD), epsilon (GABRE), rho (GABRR1-3), pi (GABRP) and theta (GABRQ) chains, each subunit exhibiting distinct physiological and pharmacological properties. Binds UBQLN1.

It localises to the postsynaptic cell membrane. The protein localises to the cell membrane. It carries out the reaction chloride(in) = chloride(out). Its activity is regulated as follows. Potentiated by histamine. Functionally, beta subunit of the heteropentameric ligand-gated chloride channel gated by gamma-aminobutyric acid (GABA), a major inhibitory neurotransmitter in the brain. GABA-gated chloride channels, also named GABA(A) receptors (GABAAR), consist of five subunits arranged around a central pore and contain GABA active binding site(s) located at the alpha and beta subunit interface(s). When activated by GABA, GABAARs selectively allow the flow of chloride anions across the cell membrane down their electrochemical gradient. Chloride influx into the postsynaptic neuron following GABAAR opening decreases the neuron ability to generate a new action potential, thereby reducing nerve transmission. Beta-containing GABAARs can simultaneously bind GABA and histamine where histamine binds at the interface of two neighboring beta subunits, which may be involved in the regulation of sleep and wakefulness. The polypeptide is Gamma-aminobutyric acid receptor subunit beta-1 (GABRB1) (Bos taurus (Bovine)).